A 321-amino-acid chain; its full sequence is MGDLPLNINIQEPRWDQSTFLGRARHFFTVTDPRNLLLSGEQLEASRNIVQNYRAGVATPGLTEDQLWRAKYVYDSAFHPDTGEKVVLIGRMSAQVPMNMTITGCMLTFYRKTPTVVFWQWVNQSFNAIVNYSNRSGDAPITVQQLGTAYVSATTGAVATALGLKSLTKHLPPLVGRFVPFAAVAAANCINIPLMRQRELQVGIPVTDEAGQRLGHSVTAAKQGIFQVVISRIGMAIPAMAIPPVIMNTLEKKDFLKRRPWLGAPLQVGLVGFCLVFATPLCCALFPQRSSIHVTRLEPELRAQIQAQNPSIDVVYYNKGL.

Met-1 is subject to N-acetylmethionine. The next 4 membrane-spanning stretches (helical) occupy residues 146–164 (LGTA…ALGL), 174–194 (LVGR…NIPL), 225–245 (IFQV…IPPV), and 266–286 (LQVG…CALF).

It belongs to the sideroflexin family. Widely expressed.

It is found in the mitochondrion membrane. The enzyme catalyses L-serine(in) = L-serine(out). Mitochondrial serine transporter that mediates transport of serine into mitochondria, an important step of the one-carbon metabolism pathway. Mitochondrial serine is converted to glycine and formate, which then exits to the cytosol where it is used to generate the charged folates that serve as one-carbon donors. In Mus musculus (Mouse), this protein is Sideroflexin-3.